The chain runs to 238 residues: Putative tyrosine-protein phosphatase OCA1 (238 aa).

The segment at 1–43 (MTSKVGEYEDVPEDESRLTEENVSVPEEEVEDEDEEEDDDDDH) is disordered. At threonine 2 the chain carries N-acetylthreonine. At serine 24 the chain carries Phosphoserine. The segment covering 26 to 42 (PEEEVEDEDEEEDDDDD) has biased composition (acidic residues). Residues 72–230 (NFCPVERYLY…LVKIDKNKAP (159 aa)) enclose the Tyrosine-protein phosphatase domain. The active-site Phosphocysteine intermediate is the cysteine 168.

Belongs to the protein-tyrosine phosphatase family.

It is found in the cytoplasm. The catalysed reaction is O-phospho-L-tyrosyl-[protein] + H2O = L-tyrosyl-[protein] + phosphate. Functionally, putative tyrosine-protein phosphatase required for protection against superoxide stress. Involved in cell-cycle delay in response to linoleic acid hydroperoxide (LoaOOH). In Saccharomyces cerevisiae (strain YJM789) (Baker's yeast), this protein is Putative tyrosine-protein phosphatase OCA1 (OCA1).